A 223-amino-acid chain; its full sequence is Cytidylate kinase (223 aa).

12-20 is a binding site for ATP; the sequence is GPSGVGKGT.

The protein belongs to the cytidylate kinase family. Type 1 subfamily.

Its subcellular location is the cytoplasm. The enzyme catalyses CMP + ATP = CDP + ADP. It catalyses the reaction dCMP + ATP = dCDP + ADP. The sequence is that of Cytidylate kinase from Xylella fastidiosa (strain M23).